The sequence spans 237 residues: UPF0173 metal-dependent hydrolase BruAb2_0628 (237 aa).

Belongs to the UPF0173 family.

In Brucella abortus biovar 1 (strain 9-941), this protein is UPF0173 metal-dependent hydrolase BruAb2_0628.